The sequence spans 387 residues: Alpha-sarcoglycan (387 aa).

Residues 1-23 (MAAAVTWIPLLAGLLAGLRDTKA) form the signal peptide. Residues 24 to 293 (QQTTLHLLVG…RDFLTDALVT (270 aa)) lie on the Extracellular side of the membrane. Asn174 and Asn246 each carry an N-linked (GlcNAc...) asparagine glycan. A helical membrane pass occupies residues 294 to 314 (LLVPLLVALLLTLLLAYIMCF). Residues 315-387 (RREGRLKRDM…AQMPLILDQH (73 aa)) are Cytoplasmic-facing. Ser377 carries the post-translational modification Phosphoserine.

Belongs to the sarcoglycan alpha/epsilon family. Cross-link to form 2 major subcomplexes: one consisting of SGCB, SGCD and SGCG and the other consisting of SGCB and SGCD. The association between SGCB and SGCG is particularly strong while SGCA is loosely associated with the other sarcoglycans. Interacts with the syntrophin SNTA1. In terms of tissue distribution, striated muscle, both skeletal and cardiac.

It localises to the cell membrane. The protein localises to the sarcolemma. The protein resides in the cytoplasm. It is found in the cytoskeleton. Functionally, component of the sarcoglycan complex, a subcomplex of the dystrophin-glycoprotein complex which forms a link between the F-actin cytoskeleton and the extracellular matrix. The protein is Alpha-sarcoglycan (Sgca) of Mus musculus (Mouse).